The sequence spans 539 residues: 3-hydroxy-3-methylglutaryl-coenzyme A reductase 1 (539 aa).

The helical transmembrane segment at 63–83 (FATVVCQLASVVYLLSLFAHP) threads the bilayer. Residues 84–124 (DAPATTTGDDDDGQGGSRRARPAAAEPAPMHGHGGGMMEAD) form a linker region. Residues 87-116 (ATTTGDDDDGQGGSRRARPAAAEPAPMHGH) form a disordered region. A compositionally biased stretch (low complexity) spans 105–114 (PAAAEPAPMH). Residues 125-539 (DEEIVAAVAS…SSKDVAKAAS (415 aa)) form a catalytic region. E218 functions as the Charge relay system in the catalytic mechanism. N282 is a glycosylation site (N-linked (GlcNAc...) asparagine). Catalysis depends on charge relay system residues K350 and D426. A helical membrane pass occupies residues 496–516 (LATIVAGSVLAGELSLLAALA). H524 functions as the Proton donor in the catalytic mechanism. N528 carries an N-linked (GlcNAc...) asparagine glycan.

This sequence belongs to the HMG-CoA reductase family.

The protein resides in the endoplasmic reticulum membrane. The catalysed reaction is (R)-mevalonate + 2 NADP(+) + CoA = (3S)-3-hydroxy-3-methylglutaryl-CoA + 2 NADPH + 2 H(+). Its pathway is metabolic intermediate biosynthesis; (R)-mevalonate biosynthesis; (R)-mevalonate from acetyl-CoA: step 3/3. Functionally, catalyzes the synthesis of mevalonate. The specific precursor of all isoprenoid compounds present in plants. The sequence is that of 3-hydroxy-3-methylglutaryl-coenzyme A reductase 1 (HMG1) from Oryza sativa subsp. indica (Rice).